A 167-amino-acid chain; its full sequence is Crossover junction endodeoxyribonuclease RuvC (167 aa).

Residues Asp-8, Glu-67, and Asp-139 contribute to the active site. Asp-8, Glu-67, and Asp-139 together coordinate Mg(2+).

The protein belongs to the RuvC family. In terms of assembly, homodimer which binds Holliday junction (HJ) DNA. The HJ becomes 2-fold symmetrical on binding to RuvC with unstacked arms; it has a different conformation from HJ DNA in complex with RuvA. In the full resolvosome a probable DNA-RuvA(4)-RuvB(12)-RuvC(2) complex forms which resolves the HJ. It depends on Mg(2+) as a cofactor.

The protein resides in the cytoplasm. It catalyses the reaction Endonucleolytic cleavage at a junction such as a reciprocal single-stranded crossover between two homologous DNA duplexes (Holliday junction).. In terms of biological role, the RuvA-RuvB-RuvC complex processes Holliday junction (HJ) DNA during genetic recombination and DNA repair. Endonuclease that resolves HJ intermediates. Cleaves cruciform DNA by making single-stranded nicks across the HJ at symmetrical positions within the homologous arms, yielding a 5'-phosphate and a 3'-hydroxyl group; requires a central core of homology in the junction. The consensus cleavage sequence is 5'-(A/T)TT(C/G)-3'. Cleavage occurs on the 3'-side of the TT dinucleotide at the point of strand exchange. HJ branch migration catalyzed by RuvA-RuvB allows RuvC to scan DNA until it finds its consensus sequence, where it cleaves and resolves the cruciform DNA. In Halorhodospira halophila (strain DSM 244 / SL1) (Ectothiorhodospira halophila (strain DSM 244 / SL1)), this protein is Crossover junction endodeoxyribonuclease RuvC.